Here is a 505-residue protein sequence, read N- to C-terminus: Cytochrome P450 2K6 (505 aa).

The chain crosses the membrane as a helical span at residues 7–27 (FLLQGSPTGTILGALLLFLVI). Cys-448 lines the heme pocket.

The protein belongs to the cytochrome P450 family. Heme serves as cofactor. Detected in liver and ovary.

Its subcellular location is the endoplasmic reticulum membrane. The protein resides in the microsome membrane. Functionally, metabolizes aflatoxin B1 (AFB1) to the cytotoxic derivative AFB1 exo-8,9-epoxide. Does not show activity towards lauric acid. The sequence is that of Cytochrome P450 2K6 from Danio rerio (Zebrafish).